The following is a 151-amino-acid chain: Odorant-binding protein (151 aa).

2 disulfides stabilise this stretch: C38-C42 and C57-C149.

This sequence belongs to the calycin superfamily. Lipocalin family. Expressed in salivary glands, hair and urine.

The protein resides in the secreted. In terms of biological role, may act as a pheromone. This chain is Odorant-binding protein, found in Phodopus sungorus (Striped hairy-footed hamster).